A 121-amino-acid chain; its full sequence is MAFKHQLILSTAILLAVLAAASASFREQCVPGREITYESLNARREYAVRQTCGYYLSAERQKRRCCDELSKVPELCWCEVLRILMDRRVTKEGVVKDSLLQDMSRCKKLTREFIAGIVGRE.

The first 24 residues, 1–24, serve as a signal peptide directing secretion; the sequence is MAFKHQLILSTAILLAVLAAASAS.

This sequence belongs to the protease inhibitor I6 (cereal trypsin/alpha-amylase inhibitor) family.

Its subcellular location is the secreted. This is Trypsin/alpha-amylase inhibitor CMX2 from Triticum aestivum (Wheat).